We begin with the raw amino-acid sequence, 289 residues long: YLVNPAAYAAPGAYMFLLILVGFPVNFLTLYVTLEHKKLRTPLNYILLNLAVADLFMVLGGFTTTMYTSMHGYFVLGRLGCNLEGFFATLGGEIALWSLVVLAIERWIVVCKPISNFRFTEDHAIMGLAFSWVMALTCAVPPLVGWSRYIPEGMQCSCGVDYYTRAEGFNNESFVIYMFIVHFLIPLSNNFFCYGRLLCAVKEAAAAQQESETTQRAEREVSRMVVMMVVSFLMCWLPYASVAWYIFCNQGSEFGPIFMTLPAFFAKSSAIYNPLIYICMNKHVRHCMI.

Topologically, residues Y1–A7 are extracellular. The chain crosses the membrane as a helical span at residues Y8 to V32. Residues T33–N44 are Cytoplasmic-facing. A helical membrane pass occupies residues Y45–Y67. The Extracellular segment spans residues T68–C81. A disulfide bridge links C81 with C158. Residues N82–I104 form a helical membrane-spanning segment. The short motif at E105 to W107 is the 'Ionic lock' involved in activated form stabilization element. The Cytoplasmic segment spans residues E105 to H123. Residues A124–V144 form a helical membrane-spanning segment. Residues G145–S173 are Extracellular-facing. N171 carries N-linked (GlcNAc...) asparagine glycosylation. The chain crosses the membrane as a helical span at residues F174–G195. The Cytoplasmic segment spans residues R196 to R223. A helical transmembrane segment spans residues M224 to Y245. Residues I246 to I257 lie on the Extracellular side of the membrane. A helical transmembrane segment spans residues F258 to C279. The residue at position 267 (K267) is an N6-(retinylidene)lysine. At M280–I289 the chain is on the cytoplasmic side.

The protein belongs to the G-protein coupled receptor 1 family. Opsin subfamily. Post-translationally, phosphorylated on some or all of the serine and threonine residues present in the C-terminal region. Contains one covalently linked retinal chromophore.

It is found in the membrane. The protein resides in the cell projection. Its subcellular location is the cilium. It localises to the photoreceptor outer segment. Photoreceptor required for image-forming vision at low light intensity. While most salt water fish species use retinal as chromophore, most freshwater fish use 3-dehydroretinal, or a mixture of retinal and 3-dehydroretinal. Light-induced isomerization of 11-cis to all-trans retinal triggers a conformational change that activates signaling via G-proteins. Subsequent receptor phosphorylation mediates displacement of the bound G-protein alpha subunit by arrestin and terminates signaling. This Cottocomephorus grewingkii (Baikal yellowfin) protein is Rhodopsin (rho).